A 206-amino-acid chain; its full sequence is MVSGSGICAKRVVVDARHHMLGRLASVVAKDLLNGQNIVVVRCEEICLSGGLVRQKMKYMRFLRKRMNTKPSHGPIHFRAPSKIFWRTVRGMIPHKTKRGANALARLKVFEGVPTPYDKIKRMVVPDALKVLRLQAGHKYCLLGRLSSEVGWNHYDTIKELENKRKERAQAVYERKKQLSKLRAKAEKVAEEKLGSQLDVLAPVKY.

Belongs to the universal ribosomal protein uL13 family.

The chain is Large ribosomal subunit protein uL13z (RPL13AA) from Arabidopsis thaliana (Mouse-ear cress).